The chain runs to 248 residues: MNICLLCEEGADNSALSALAQRWGLIHDATQTMALVLTPTHLELRKQDEPKLGGIYVDFVAGTMAHRRKFGGGRGEAVAKAVGIKKDYLPDVVDATAGLGRDAFVLASIGCNVRMVERHPVVAALLEDGLKRAYLDADIGEWMQQRMKLIYASSAQALTQISPTPDVVYLDPMYPHKTKSALVKKEMRVFQSLVGADEDADALLAPAMALAKKRVVVKRPDYAEPLNNQPAHASVTTKNHRFDIYPCI.

Residues 101–102 (RD), 117–118 (ER), 153–154 (SS), and Asp171 each bind S-adenosyl-L-methionine.

This sequence belongs to the methyltransferase superfamily. RsmJ family.

It localises to the cytoplasm. It catalyses the reaction guanosine(1516) in 16S rRNA + S-adenosyl-L-methionine = N(2)-methylguanosine(1516) in 16S rRNA + S-adenosyl-L-homocysteine + H(+). Its function is as follows. Specifically methylates the guanosine in position 1516 of 16S rRNA. The protein is Ribosomal RNA small subunit methyltransferase J of Proteus mirabilis (strain HI4320).